The following is a 286-amino-acid chain: Elongation factor Ts (286 aa).

The segment at 82–85 (TDFV) is involved in Mg(2+) ion dislocation from EF-Tu. The tract at residues 212–286 (VAAQTGQKVE…SPSKKGKKKK (75 aa)) is disordered. The segment covering 215–227 (QTGQKVEQPQAAQ) has biased composition (polar residues). Residues 253 to 269 (ETDSPAAETTTEPPKTT) are compositionally biased toward low complexity.

The protein belongs to the EF-Ts family.

The protein resides in the cytoplasm. Associates with the EF-Tu.GDP complex and induces the exchange of GDP to GTP. It remains bound to the aminoacyl-tRNA.EF-Tu.GTP complex up to the GTP hydrolysis stage on the ribosome. The chain is Elongation factor Ts from Gloeothece citriformis (strain PCC 7424) (Cyanothece sp. (strain PCC 7424)).